Reading from the N-terminus, the 602-residue chain is Aspartate--tRNA(Asp/Asn) ligase (602 aa).

Residue E175 participates in L-aspartate binding. Positions 199–202 (QIFK) are aspartate. R221 lines the L-aspartate pocket. ATP contacts are provided by residues 221–223 (RDE) and Q230. L-aspartate is bound at residue H458. E492 lines the ATP pocket. L-aspartate is bound at residue R499. 544–547 (GLDR) contacts ATP.

The protein belongs to the class-II aminoacyl-tRNA synthetase family. Type 1 subfamily. As to quaternary structure, homodimer.

The protein resides in the cytoplasm. It catalyses the reaction tRNA(Asx) + L-aspartate + ATP = L-aspartyl-tRNA(Asx) + AMP + diphosphate. Aspartyl-tRNA synthetase with relaxed tRNA specificity since it is able to aspartylate not only its cognate tRNA(Asp) but also tRNA(Asn). Reaction proceeds in two steps: L-aspartate is first activated by ATP to form Asp-AMP and then transferred to the acceptor end of tRNA(Asp/Asn). The protein is Aspartate--tRNA(Asp/Asn) ligase of Cupriavidus taiwanensis (strain DSM 17343 / BCRC 17206 / CCUG 44338 / CIP 107171 / LMG 19424 / R1) (Ralstonia taiwanensis (strain LMG 19424)).